We begin with the raw amino-acid sequence, 701 residues long: Ubiquitin thioesterase zranb1 (701 aa).

The RanBP2-type 1 zinc finger occupies 3–33 (EHGIKWACEYCTYENWPSAIKCTMCRAPRPS). C10, C13, C24, and C27 together coordinate Zn(2+). The interval 38 to 59 (TEEPFKNSTPDVGSMERESGSP) is disordered. Residues 79-108 (TSTKWSCHMCTYLNWPRAIRCTQCLSQRRT) form a RanBP2-type 2 zinc finger. Zn(2+)-binding residues include C85, C88, C99, and C102. A disordered region spans residues 108-129 (TRSPTESPQSSGSSLRAIPSPI). The span at 111–121 (PTESPQSSGSS) shows a compositional bias: low complexity. The segment at 143 to 173 (IKGQHWTCSACTYENCAKAKKCVVCDHPTPN) adopts a RanBP2-type 3 zinc-finger fold. Zn(2+)-binding residues include C150, C153, C164, and C167. The disordered stretch occupies residues 198–220 (WRGGCSSSNSQRRSPPTSKRDSD). Polar residues predominate over residues 202 to 214 (CSSSNSQRRSPPT). 2 ANK repeats span residues 253 to 283 (RKTD…SGGD) and 306 to 333 (YTLV…QHAA). Positions 425-585 (LYALWNRTAG…RGHFSALVAM (161 aa)) constitute an OTU domain. The active-site Nucleophile is the C436. The active-site Proton acceptor is H578.

This sequence belongs to the peptidase C64 family.

The protein localises to the cytoplasm. It is found in the nucleus. It carries out the reaction Thiol-dependent hydrolysis of ester, thioester, amide, peptide and isopeptide bonds formed by the C-terminal Gly of ubiquitin (a 76-residue protein attached to proteins as an intracellular targeting signal).. Its function is as follows. Ubiquitin thioesterase, which specifically hydrolyzes 'Lys-29'-linked and 'Lys-33'-linked diubiquitin. Also cleaves 'Lys-63'-linked chains, but with 40-fold less efficiency compared to 'Lys-29'-linked ones. Positive regulator of the Wnt signaling pathway that deubiquitinates apc protein, a negative regulator of Wnt-mediated transcription. Acts as a regulator of autophagy by mediating deubiquitination of pik3c3/vps34, thereby promoting autophagosome maturation. Plays a role in the regulation of cell morphology and cytoskeletal organization. Required in the stress fiber dynamics and cell migration. This Xenopus tropicalis (Western clawed frog) protein is Ubiquitin thioesterase zranb1 (zranb1).